Reading from the N-terminus, the 359-residue chain is Pyruvate dehydrogenase E1 component subunit beta, mitochondrial (359 aa).

The N-terminal 30 residues, 1-30 (MAAVAGLVRGPLRQASGLLKRRFHRSAPAA), are a transit peptide targeting the mitochondrion. At Y67 the chain carries Phosphotyrosine. E89 is a binding site for thiamine diphosphate. 5 residues coordinate K(+): I142, A190, I191, D193, and N195. N6-acetyllysine is present on K354.

As to quaternary structure, heterotetramer of two PDHA1 and two PDHB subunits. The heterotetramer interacts with DLAT, and is part of the multimeric pyruvate dehydrogenase complex that contains multiple copies of pyruvate dehydrogenase (E1), dihydrolipoamide acetyltransferase (DLAT, E2) and lipoamide dehydrogenase (DLD, E3). These subunits are bound to an inner core composed of about 48 DLAT and 12 PDHX molecules. Interacts with DLAT. It depends on thiamine diphosphate as a cofactor.

Its subcellular location is the mitochondrion matrix. The enzyme catalyses N(6)-[(R)-lipoyl]-L-lysyl-[protein] + pyruvate + H(+) = N(6)-[(R)-S(8)-acetyldihydrolipoyl]-L-lysyl-[protein] + CO2. The pyruvate dehydrogenase complex catalyzes the overall conversion of pyruvate to acetyl-CoA and CO(2), and thereby links the glycolytic pathway to the tricarboxylic cycle. This is Pyruvate dehydrogenase E1 component subunit beta, mitochondrial (Pdhb) from Rattus norvegicus (Rat).